We begin with the raw amino-acid sequence, 149 residues long: Potassium binding protein Kbp (149 aa).

Residues 23–91 enclose the BON domain; it reads DKDDQAKKVQ…SVDDQVKTAT (69 aa). A LysM domain is found at 97-146; it reads QFYTVKSGDTLSAISKQVYGNANLYNKIFEANKPMLKSPDKIYPGQVLRI.

The protein resides in the cytoplasm. Functionally, highly specific potassium binding protein that is required for normal growth in the presence of high levels of external K(+). May act as a sensor of cytoplasmic K(+) concentration. This chain is Potassium binding protein Kbp, found in Escherichia coli O6:H1 (strain CFT073 / ATCC 700928 / UPEC).